A 332-amino-acid polypeptide reads, in one-letter code: Biotin synthase (332 aa).

Positions 53–283 (WGKGGVHACS…VHPRKTIKFA (231 aa)) constitute a Radical SAM core domain. Positions 71, 75, and 78 each coordinate [4Fe-4S] cluster. [2Fe-2S] cluster is bound by residues cysteine 150, cysteine 211, and lysine 281.

Belongs to the radical SAM superfamily. Biotin synthase family. Homodimer. Requires [4Fe-4S] cluster as cofactor. The cofactor is [2Fe-2S] cluster.

It carries out the reaction (4R,5S)-dethiobiotin + (sulfur carrier)-SH + 2 reduced [2Fe-2S]-[ferredoxin] + 2 S-adenosyl-L-methionine = (sulfur carrier)-H + biotin + 2 5'-deoxyadenosine + 2 L-methionine + 2 oxidized [2Fe-2S]-[ferredoxin]. The protein operates within cofactor biosynthesis; biotin biosynthesis; biotin from 7,8-diaminononanoate: step 2/2. Its function is as follows. Catalyzes the conversion of dethiobiotin (DTB) to biotin by the insertion of a sulfur atom into dethiobiotin via a radical-based mechanism. This chain is Biotin synthase, found in Chlorobium luteolum (strain DSM 273 / BCRC 81028 / 2530) (Pelodictyon luteolum).